The following is a 277-amino-acid chain: Bifunctional protein FolD (277 aa).

NADP(+)-binding positions include 156-158, serine 183, and isoleucine 224; that span reads GRS.

It belongs to the tetrahydrofolate dehydrogenase/cyclohydrolase family. In terms of assembly, homodimer.

It catalyses the reaction (6R)-5,10-methylene-5,6,7,8-tetrahydrofolate + NADP(+) = (6R)-5,10-methenyltetrahydrofolate + NADPH. It carries out the reaction (6R)-5,10-methenyltetrahydrofolate + H2O = (6R)-10-formyltetrahydrofolate + H(+). It functions in the pathway one-carbon metabolism; tetrahydrofolate interconversion. Its function is as follows. Catalyzes the oxidation of 5,10-methylenetetrahydrofolate to 5,10-methenyltetrahydrofolate and then the hydrolysis of 5,10-methenyltetrahydrofolate to 10-formyltetrahydrofolate. The protein is Bifunctional protein FolD of Kosmotoga olearia (strain ATCC BAA-1733 / DSM 21960 / TBF 19.5.1).